Here is a 379-residue protein sequence, read N- to C-terminus: Presenilin-associated rhomboid-like protein, mitochondrial (379 aa).

Residues 1–52 constitute a mitochondrion transit peptide; sequence MAWRGWAQRGWGCGQAWAASVGGRSCEELTAALTPPRLLGRRFNFFIQQKCG. Over 53–101 the chain is Mitochondrial matrix; it reads FRKAPRKVEPRRSDTGTSGEAYKRSALIPPVEETVFYPSPYPIRSLIKP. The residue at position 65 (Ser65) is a Phosphoserine. Phosphothreonine is present on Thr69. Ser70 bears the Phosphoserine mark. The chain crosses the membrane as a helical span at residues 102 to 121; it reads LFFTVGFTGCAFGSAAIWQY. The Mitochondrial intermembrane portion of the chain corresponds to 122–167; the sequence is ESLKSRVQSYFDGIKADWLDSIRPQKEGDFRKEINKWWNNLSDGQR. Residues 168-187 traverse the membrane as a helical segment; that stretch reads TVTGIIAANVLVFCLWRVPS. At 188 to 207 the chain is on the mitochondrial matrix side; it reads LQRTMIRYFTSNPASKVLCS. The helical transmembrane segment at 208–230 threads the bilayer; sequence PMLLSTFSHFSLFHMAANMYVLW. Residues 231 to 244 are Mitochondrial intermembrane-facing; the sequence is SFSSSIVNILGQEQ. The chain crosses the membrane as a helical span at residues 245 to 262; that stretch reads FMAVYLSAGVISNFVSYV. Topologically, residues 263 to 273 are mitochondrial matrix; it reads GKVATGRYGPS. Residues 274–292 form a helical membrane-spanning segment; sequence LGASGAIMTVLAAVCTKIP. Ser277 serves as the catalytic Nucleophile. The Mitochondrial intermembrane portion of the chain corresponds to 293–295; that stretch reads EGR. Residues 296–318 traverse the membrane as a helical segment; that stretch reads LAIIFLPMFTFTAGNALKAIIAM. At 319–332 the chain is on the mitochondrial matrix side; it reads DTAGMILGWKFFDH. Residues 333 to 354 traverse the membrane as a helical segment; it reads AAHLGGALFGIWYVTYGHELIW. Residue His335 is part of the active site. Topologically, residues 355 to 379 are mitochondrial intermembrane; the sequence is KNREPLVKIWHEIRTNGPKKGGGSK.

Belongs to the peptidase S54 family. In terms of assembly, interacts with PSEN1 and PSEN2. Binds OPA1. Post-translationally, P-beta is proteolytically processed (beta-cleavage) in a PARL-dependent manner.

The protein resides in the mitochondrion inner membrane. Its subcellular location is the nucleus. It catalyses the reaction Cleaves type-1 transmembrane domains using a catalytic dyad composed of serine and histidine that are contributed by different transmembrane domains.. Functionally, required for the control of apoptosis during postnatal growth. Essential for proteolytic processing of an antiapoptotic form of OPA1 which prevents the release of mitochondrial cytochrome c in response to intrinsic apoptotic signals. Required for the maturation of PINK1 into its 52kDa mature form after its cleavage by mitochondrial-processing peptidase (MPP). Promotes cleavage of serine/threonine-protein phosphatase PGAM5 in damaged mitochondria in response to loss of mitochondrial membrane potential. Mediates differential cleavage of PINK1 and PGAM5 depending on the health status of mitochondria, disassociating from PINK1 and associating with PGAM5 in response to mitochondrial membrane potential loss. Required for processing of CLPB into a form with higher protein disaggregase activity by removing an autoinhibitory N-terminal peptide. Promotes processing of DIABLO/SMAC in the mitochondrion which is required for DIABLO apoptotic activity. Also required for cleavage of STARD7 and TTC19. Promotes changes in mitochondria morphology regulated by phosphorylation of P-beta domain. The protein is Presenilin-associated rhomboid-like protein, mitochondrial (PARL) of Pongo abelii (Sumatran orangutan).